Here is a 137-residue protein sequence, read N- to C-terminus: Large ribosomal subunit protein uL16 (137 aa).

The interval 1–22 (MLQPKRTKFRKQQKGRNRGLAH) is disordered.

This sequence belongs to the universal ribosomal protein uL16 family. In terms of assembly, part of the 50S ribosomal subunit.

Binds 23S rRNA and is also seen to make contacts with the A and possibly P site tRNAs. In Saccharophagus degradans (strain 2-40 / ATCC 43961 / DSM 17024), this protein is Large ribosomal subunit protein uL16.